Reading from the N-terminus, the 212-residue chain is Methylthioribulose-1-phosphate dehydratase (212 aa).

The Zn(2+) site is built by H98 and H100.

It belongs to the aldolase class II family. MtnB subfamily. The cofactor is Zn(2+).

The catalysed reaction is 5-(methylsulfanyl)-D-ribulose 1-phosphate = 5-methylsulfanyl-2,3-dioxopentyl phosphate + H2O. It participates in amino-acid biosynthesis; L-methionine biosynthesis via salvage pathway; L-methionine from S-methyl-5-thio-alpha-D-ribose 1-phosphate: step 2/6. Its function is as follows. Catalyzes the dehydration of methylthioribulose-1-phosphate (MTRu-1-P) into 2,3-diketo-5-methylthiopentyl-1-phosphate (DK-MTP-1-P). In Picosynechococcus sp. (strain ATCC 27264 / PCC 7002 / PR-6) (Agmenellum quadruplicatum), this protein is Methylthioribulose-1-phosphate dehydratase.